The following is a 75-amino-acid chain: DNA-directed RNA polymerase subunit omega (75 aa).

Belongs to the RNA polymerase subunit omega family. As to quaternary structure, the RNAP catalytic core consists of 2 alpha, 1 beta, 1 beta' and 1 omega subunit. When a sigma factor is associated with the core the holoenzyme is formed, which can initiate transcription.

The catalysed reaction is RNA(n) + a ribonucleoside 5'-triphosphate = RNA(n+1) + diphosphate. In terms of biological role, promotes RNA polymerase assembly. Latches the N- and C-terminal regions of the beta' subunit thereby facilitating its interaction with the beta and alpha subunits. The protein is DNA-directed RNA polymerase subunit omega of Nitratidesulfovibrio vulgaris (strain DSM 19637 / Miyazaki F) (Desulfovibrio vulgaris).